Reading from the N-terminus, the 678-residue chain is Proprotein convertase subtilisin/kexin type 4 (678 aa).

The signal sequence occupies residues 1–26 (MRPSQTALWLGLVLSLALLAVGWASA). Positions 27 to 110 (RPPIYVSSWA…QQTLRRRVKR (84 aa)) are excised as a propeptide. Positions 123-437 (QWYMNKEIEQ…YGLLDAGLLV (315 aa)) constitute a Peptidase S8 domain. Residues aspartate 155, histidine 196, and serine 370 each act as charge relay system in the active site. Positions 446–580 (TKPQKKCTIR…TLLLYGTAED (135 aa)) constitute a P/Homo B domain. Asparagine 472 is a glycosylation site (N-linked (GlcNAc...) asparagine).

It belongs to the peptidase S8 family. Furin subfamily. The proPCSK4 form interacts with HSPA5; the interaction takes place at the endoplasmic reticulum. Post-translationally, N-glycosylated. Synthesized in the endoplasmic reticulum as a zymogen, is matured by autocatalytic cleavage between the prodomain and the catalytic domain. As to expression, expressed abundantly in the testis. High levels seen in germ cells but not in Leydig, Sertoli or peritubular cells. Expressed in the pachytene spermatocytes and the round spermatids but not in the elongating spermatids. May be expressed within hormonally stimulated ovaries.

It is found in the cytoplasmic vesicle. Its subcellular location is the secretory vesicle. The protein resides in the acrosome membrane. Its function is as follows. Proprotein convertase involved in the processing of hormone and other protein precursors at sites comprised of pairs of basic amino acid residues. In males, important for ADAM2 processing as well as other acrosomal proteins with roles in fertilization and critical for normal fertilization events such as sperm capacitation, acrosome reaction and binding of sperm to zona pellucida. Plays also a role in female fertility, involved in the regulation of trophoblast migration and placental development, may be through the proteolytical processing and activation of proteins such as IGF2. May also participate in folliculogenesis in the ovaries. This is Proprotein convertase subtilisin/kexin type 4 (Pcsk4) from Rattus norvegicus (Rat).